The primary structure comprises 496 residues: MFS transporter cpaT (496 aa).

The disordered stretch occupies residues 1–45; the sequence is MGHQEEPPRICKTPSGHEQGEGPAEKTSKPSTEEVGWDGPTDPAR. The span at 18–32 shows a compositional bias: basic and acidic residues; sequence EQGEGPAEKTSKPST. Residue Asn-48 is glycosylated (N-linked (GlcNAc...) asparagine). A helical transmembrane segment spans residues 58 to 78; that stretch reads MGIISYLTFLTPLTSSIVAPA. Asn-90 carries N-linked (GlcNAc...) asparagine glycosylation. 5 helical membrane passes run 93–113, 130–150, 154–174, 180–200, and 212–232; these read LASFVVSIYLVGFAVGPLFLA, FIFTIWNIAGAVAPNVGALLV, FAGISGSGPVTLGAGSVADMF, GVAMSLYGLGPLLGPVIGPIA, and WVFWLLAIVSGVAVILVLFVL. Asn-252 carries an N-linked (GlcNAc...) asparagine glycan. The next 6 membrane-spanning stretches (helical) occupy residues 288–308, 325–345, 367–387, 395–415, 427–449, and 463–483; these read VALFSLYTGVVFGYLYLLFTT, GLVYIGIGVGALIGISCFGAL, LPPLIPGSFLIPIGLFWYGWS, IMPIIGLGWVGCGMIATLLPI, AASAIAANTVVRSIVGAFLPLAG, and SLLGFVALGLLPVPVVFYFYG.

The protein belongs to the major facilitator superfamily.

Its subcellular location is the membrane. Its function is as follows. MFS transporter; part of the gene cluster that mediates the biosynthesis of the fungal neurotoxin cyclopiazonic acid (CPA), a nanomolar inhibitor of Ca(2+)-ATPase with a unique pentacyclic indole tetramic acid scaffold. The polypeptide is MFS transporter cpaT (Aspergillus oryzae (Yellow koji mold)).